A 232-amino-acid chain; its full sequence is Large ribosomal subunit protein uL1 (232 aa).

It belongs to the universal ribosomal protein uL1 family. Part of the 50S ribosomal subunit.

Binds directly to 23S rRNA. The L1 stalk is quite mobile in the ribosome, and is involved in E site tRNA release. Functionally, protein L1 is also a translational repressor protein, it controls the translation of the L11 operon by binding to its mRNA. This Dinoroseobacter shibae (strain DSM 16493 / NCIMB 14021 / DFL 12) protein is Large ribosomal subunit protein uL1.